The sequence spans 233 residues: Phosphoglycolate phosphatase (233 aa).

The Nucleophile role is filled by Asp-9. Residues Asp-9 and Asp-11 each coordinate Mg(2+). Residue Lys-154 coordinates substrate. Asp-177 and Asp-181 together coordinate Mg(2+).

This sequence belongs to the archaeal SPP-like hydrolase family. Mg(2+) serves as cofactor.

The catalysed reaction is 2-phosphoglycolate + H2O = glycolate + phosphate. In terms of biological role, catalyzes the dephosphorylation of 2-phosphoglycolate. The protein is Phosphoglycolate phosphatase of Pyrococcus abyssi (strain GE5 / Orsay).